The chain runs to 364 residues: Coproporphyrin III ferrochelatase (364 aa).

2 residues coordinate Fe-coproporphyrin III: R29 and Y118. Residues H169 and E250 each contribute to the Fe(2+) site.

It belongs to the ferrochelatase family.

Its subcellular location is the cytoplasm. The catalysed reaction is Fe-coproporphyrin III + 2 H(+) = coproporphyrin III + Fe(2+). The protein operates within porphyrin-containing compound metabolism; protoheme biosynthesis. In terms of biological role, involved in coproporphyrin-dependent heme b biosynthesis. Catalyzes the insertion of ferrous iron into coproporphyrin III to form Fe-coproporphyrin III. The sequence is that of Coproporphyrin III ferrochelatase from Streptococcus pneumoniae (strain Hungary19A-6).